Consider the following 328-residue polypeptide: Nuclear transcription factor Y subunit A-8 (328 aa).

A disordered region spans residues 54 to 86; the sequence is KNISFQDQDSSSTLSSAQSSNDVTSSGDDNPSR. Low complexity predominate over residues 57–75; sequence SFQDQDSSSTLSSAQSSND. The span at 76–86 shows a compositional bias: polar residues; that stretch reads VTSSGDDNPSR. A Subunit association domain (SAD) motif is present at residues 175–198; the sequence is FVNAKQFHAIMRRRQQRAKLEAQN. Positions 205–230 form a DNA-binding region, NFYA/HAP2-type; sequence KPYLHESRHVHALKRPRGSGGRFLNT.

It belongs to the NFYA/HAP2 subunit family. Heterotrimeric transcription factor composed of three components, NF-YA, NF-YB and NF-YC. NF-YB and NF-YC must interact and dimerize for NF-YA association and DNA binding. As to expression, expressed in the whole plant, except roots.

The protein localises to the nucleus. In terms of biological role, stimulates the transcription of various genes by recognizing and binding to a CCAAT motif in promoters. In Arabidopsis thaliana (Mouse-ear cress), this protein is Nuclear transcription factor Y subunit A-8 (NFYA8).